The primary structure comprises 360 residues: Phosphoserine aminotransferase (360 aa).

Arg-41 is a binding site for L-glutamate. Trp-101, Thr-152, Asp-172, and Gln-195 together coordinate pyridoxal 5'-phosphate. The residue at position 196 (Lys-196) is an N6-(pyridoxal phosphate)lysine. 237-238 (NT) lines the pyridoxal 5'-phosphate pocket.

It belongs to the class-V pyridoxal-phosphate-dependent aminotransferase family. SerC subfamily. In terms of assembly, homodimer. It depends on pyridoxal 5'-phosphate as a cofactor.

Its subcellular location is the cytoplasm. The catalysed reaction is O-phospho-L-serine + 2-oxoglutarate = 3-phosphooxypyruvate + L-glutamate. The enzyme catalyses 4-(phosphooxy)-L-threonine + 2-oxoglutarate = (R)-3-hydroxy-2-oxo-4-phosphooxybutanoate + L-glutamate. Its pathway is amino-acid biosynthesis; L-serine biosynthesis; L-serine from 3-phospho-D-glycerate: step 2/3. The protein operates within cofactor biosynthesis; pyridoxine 5'-phosphate biosynthesis; pyridoxine 5'-phosphate from D-erythrose 4-phosphate: step 3/5. In terms of biological role, catalyzes the reversible conversion of 3-phosphohydroxypyruvate to phosphoserine and of 3-hydroxy-2-oxo-4-phosphonooxybutanoate to phosphohydroxythreonine. The sequence is that of Phosphoserine aminotransferase from Burkholderia cenocepacia (strain HI2424).